A 242-amino-acid polypeptide reads, in one-letter code: tRNA pseudouridine synthase A (242 aa).

The active-site Nucleophile is D51. Substrate is bound at residue Y107.

The protein belongs to the tRNA pseudouridine synthase TruA family. In terms of assembly, homodimer.

The enzyme catalyses uridine(38/39/40) in tRNA = pseudouridine(38/39/40) in tRNA. In terms of biological role, formation of pseudouridine at positions 38, 39 and 40 in the anticodon stem and loop of transfer RNAs. This Helicobacter pylori (strain J99 / ATCC 700824) (Campylobacter pylori J99) protein is tRNA pseudouridine synthase A.